The primary structure comprises 199 residues: Probable cobalt-precorrin-6B C(15)-methyltransferase (decarboxylating) (199 aa).

S-adenosyl-L-methionine-binding positions include T24, 48 to 52, D72, and A101; that span reads GCGTG.

It belongs to the methyltransferase superfamily. Archaeal-type CbiT family.

The catalysed reaction is Co-precorrin-6B + S-adenosyl-L-methionine = Co-precorrin-7 + S-adenosyl-L-homocysteine + CO2. It participates in cofactor biosynthesis; adenosylcobalamin biosynthesis; cob(II)yrinate a,c-diamide from sirohydrochlorin (anaerobic route): step 8/10. Its function is as follows. Catalyzes the methylation of C-15 in cobalt-precorrin-6B followed by the decarboxylation of C-12 to form cobalt-precorrin-7. The sequence is that of Probable cobalt-precorrin-6B C(15)-methyltransferase (decarboxylating) from Saccharolobus solfataricus (strain ATCC 35092 / DSM 1617 / JCM 11322 / P2) (Sulfolobus solfataricus).